The chain runs to 453 residues: UDP-glycosyltransferase 79B3 (453 aa).

UDP-alpha-D-glucose-binding positions include S266, 325–327 (VQQ), 342–350 (HCGFGSMWE), and 364–367 (LGDQ).

Belongs to the UDP-glycosyltransferase family.

In Arabidopsis thaliana (Mouse-ear cress), this protein is UDP-glycosyltransferase 79B3 (UGT79B3).